The chain runs to 314 residues: Homoserine O-succinyltransferase (314 aa).

The active-site Acyl-thioester intermediate is cysteine 142. Substrate-binding residues include lysine 163 and serine 192. The active-site Proton acceptor is the histidine 235. Residue glutamate 237 is part of the active site. Substrate is bound at residue arginine 249.

It belongs to the MetA family.

The protein localises to the cytoplasm. It carries out the reaction L-homoserine + succinyl-CoA = O-succinyl-L-homoserine + CoA. It functions in the pathway amino-acid biosynthesis; L-methionine biosynthesis via de novo pathway; O-succinyl-L-homoserine from L-homoserine: step 1/1. In terms of biological role, transfers a succinyl group from succinyl-CoA to L-homoserine, forming succinyl-L-homoserine. The protein is Homoserine O-succinyltransferase of Shewanella pealeana (strain ATCC 700345 / ANG-SQ1).